The chain runs to 86 residues: MGINQSQHSMGVNQSHHFMGVNQSHHFMGINQSQHSMGVNQHIIGDSYLISCMVVAPCCLKACMVLAPCCLKACMVLAPCCLKAAR.

This is an uncharacterized protein from African swine fever virus (strain Badajoz 1971 Vero-adapted) (Ba71V).